The primary structure comprises 3630 residues: MNKIYKVIWNATLLAWVAVSELAKGKTKSTTSKSKAKSLSSSVIVGGIILTTPLSLIAATVQVGGGTNSGTTATASTNCADLYNYQNPENSGSGAAGNYNAGNPSVCSIAIGENAQGGTSGTGGSPGIAIGGNSKATGGLSVAIGGYAQATNVGSIALGTAALSSGFNSLAISRQAAATNNYSIAIGTTSVSKGVGSIAMGHSTNASGDQSIAIGSSDAVNSATATTTYDGTTNTQASGSKSIAIGASAKASTNNSIALGAGSVTSAQSGNSYLTGVGASATNGVVSVGTSTATRRIQNVADGSAASDAVTVAQLDKAYDDTNGRLAAALGTGSGAAYNAANNTYTAPTNIGGTGKNTIDDAIKATQRSVVAGSNIVVTPTTASDGSISYSVATSATPTFTSITVNNAPTAGTDATNKTYVDSKAAASRTEVAAGSNVSGVVKTTGANGQDVYTVNANGTTASAGSSAVTVTPGTKDANNVTDYKVDLSATTKTDIQKGVDAKNAVDTAGLKFKGDTATTSNTKKLGDTVSITGDTNISTVATTDGVQVKLNPNLDLGATGSVKTGNTTINNAGVTADQVTVGGVVINNTSGINAGGKAITNVAAPTNNTDAANKKYVDDAGTALTNLGFGLKAQDGTTVNKKLGEAVDIVGSNSNISTKVNAGKVEVALSNTLDLGTTGSVTTGSTVINNAGVTATQVTANKVTINNAPTAGTDATNKTYVDSKAAASRTEVAAGSNVSGVVKTTGANGQDIYAVNANGTTASAGSSAVTVTPGTKDANNVTDYKVDLSATTKTDIQKGVDAKNAVDTAGLKFKGDTATTSNTKKLGDTVSITGDTNISTVATTDGVQVKLNPNLDLGATGSVKTGNTTINNAGVTADQVTVGGVVINNTSGINAGGKAITNVAAPTNNTDAANKKYVDDAGTALTNLGFGLKAQDGTTVNKKLGEAVDIVGSNSNISTKVNAGKVEVALSNTLDLGTTGSVTTGSTVINNAGVTATQVTANKVTVNNAPTAGTDATNKTYVDSKAAASRTEVAAGSNVSGVVKTTGANGQDVYTVNANGTTASAGSSAVTVTPGTKDANNVTDYKVDLSATTKTDIQKGVDAKNAVDTAGLKFKGDTATTSNTKKLGDTVSITGDTNISTVATTDGVQVKLNPNLDLGATGSVKTGNTTINNAGVTADQVTVGGVVINNTSGINAGGKAITNVAAPTNNTDAANKKYVDDAGTALTNLGFGLKAQDGTTVNKKLGEAVEVVGADSNITTKVAGGQVAIELNKNLNNLTGITVNDGTNGTNGSTVIGKDGISVKDGSGNTIAGVDNTALTVKDGSGNTETSINQAINTLNAAQGETDKFAVKYDKNADGSVNYNNITLAGTTASSTQDATTGKITTTGGTSLNNVASAGDYKDVANASKGVNAGDLNNAVVDATNAATSKGFALQAADGAKVQKNLGEAVEVVGADSNITTKVAGGQVAIELNKNLNNLTGITVNDGTNGTNGSTVIGKDGISVKDGSGNTIAGVDNTALTVKDGSGNTETSINQAINTLNAAQGETDKFAVKYDKNTDGSTNYNSITAGNGNGTAATIGTDTAGNSVVTSGGTKISNVANGVNASDAVNKGQLDSLSTGLTNTGFGLKAADGNTVNKKLGEAVDVVGADSNITTKVAGGQVAIELNKNLNNLTGITVNDGTNGTNGSTVIGKDGISIKDGSGNTIAGVDNTALTVKDGSGNTETSINQAINTLNAAQGETDKFAVKYDKNADGSANYNNITLAGTTASSTQDATTGKITTTGGTSLNNVASAGDYKDVANASKGVNAGDLNNAVVDATNAATSKGFALQAADGAKVQKNLGEAVEVVGADSNITTKVVGGQVAIELNKNLNNLTGITVNDGTNGTNGSTVIGKDGISVKDGSGNTIAGVDNTALTVKDGSGNTETSINQAINTLNAAQGETDKFAVKYDKNADGSVNYNNITLAGTTASSTQDATTGKITTTGGTSLNNVASAGDYKDVANASKGVNAGDLNNAVVDATNAATSKGFALQAADGAKVQKNLGEAVEVVGADSNITTKVAGGQVAIELNKNLNNLTGITVNDGTNGTNGSTVIGKDGISVKDGSGNTIAGVDNTALTVKDGSGNTETSINQAINTLNAAQGETDKFAVKYDKNADGSVNYNNITLAGTTASSTQDATTGKITTTGGTSLNNVASAGDYKDVANASKGVNAGDLNNAVVDATNAATSKGFALQAADGAKVQKNLGEAVEVVGADSNITTKVAGGQVAIELNKNLNNLTGITVNDGTNGTNGSTVIGKDGISVKDGSGNTIAGVDNTALTVKDGSGNTETSINQAINTLNAAQGETDKFAVKYDKNADGSANYNNVTLAGTNGTIISNVKAGAVTSTSTDAINGSQLYGVANSVKNAIGGSTTIDATTGAITTTNIGGTGSNTIDGAISSIKDSATKAKTTVSAGDNVVVTSGTNADGSTNYEVATAKDVNFDKVTVGSVVVDKSSNTIKGLSNTTWNGTAVSGQAATEDQLKTVSDAQGETDKFAVKYDKNADGSANYNSITAGNGNGTAATIGTDTAGNSVVTSGGTKISNVANGVNASDAVNKGQLDSLSTGLTNTGFGLKAADGNTVNKKLGEAVDVVGADSNITTKVAGGQVAIELNKNLNNLTGITVNDGTNGTNGSTVIGKDGISIKDGSGNTIAGVDNTALTVKDSSGNTETSINQAINTLNAAQGETDKFAVKYDKNADGSVNYNNVTLAGTNGTIIRNVKAGAVTSTSTDAINGSQLYDIANSVKNAIGGSTTRDVTTGAITTTNIGGTGSNTIDGAISSIKDSATKAKTTISAGDNVVVTSGTNADGSTNYEVATAKDVNFDKVTVGNVVVDKANDTIQGLSNKDLNSTDFATKGRAATEEQLKAVITSNITEVVDGNGNKVNIIDQVVNTKPDNKNQDSLFLTYDKQGQETTDRLTIGQTVQKMNTDGIKFFHTNADTSKGDLGTTNDSSAGGLNSTAIGVNAIVANGADSSVALGHNTKVNGKQSIAIGSGAEALGNQSISIGTGNKVTGDHSGAIGDPTIVNGANSYSVGNNNQVLTDDTFVLGNNVTKTIAGSVVLGNGSAATTGAGEAGYALSVATNADKAAITKTTSSTGAVAVGDASSGIYRQITGVAAGSVDSDAVNVAQLKAVGNQVVTTQTTLVNSLGGNAKVNADGTITGPTYNVAQGNQTNVGDALTALDNAINTAATTSKSTVSNGQNIVVSKSKNADGSDNYEVSTAKDLTVDSVKAGDTVLNNAGITIGNNAVVLNNTGLTISGGPSVTLAGIDAGNKTIQNVANAVNATDAVNKGQLDSAINNVNNNVNELANNAVKYDDASKDKITLGGGATGTTITNVKDGTVAQGSKDAVNGGQLWNVQQQVDQNTTDISNIKNDINNGTVGLVQQAGKDAPVTVAKDTGGTTVNVAGTDGNRVVTGVKEGAVNATSKDAVNGSQLNTTNQAVVNYLGGGAGYDNITGSFTAPSYTVGDSKYNNVGGAIDALNQADQALNSKIDNVSNKLDNAFRITNNRIDDVEKKANAGIAAAMALESAPYVPGKYTYAAGAAYHGGENAVGVTLRKTADNGRWSITGGVAAASQGDASVRIGISGVID.

An N-terminal signal peptide occupies residues 1 to 23 (MNKIYKVIWNATLLAWVAVSELA). The segment at 24-3487 (KGKTKSTTSK…TNQAVVNYLG (3464 aa)) is surface exposed passenger domain. Positions 108 to 315 (SIAIGENAQG…ASDAVTVAQL (208 aa)) are N-terminal YadA-like head. The segment at 316 to 2904 (DKAYDDTNGR…GRAATEEQLK (2589 aa)) is N-terminal stalk. Residues 2905 to 3169 (AVITSNITEV…DSDAVNVAQL (265 aa)) are C-terminal YadA-like head. The C-terminal stalk stretch occupies residues 3170–3561 (KAVGNQVVTT…DVEKKANAGI (392 aa)). The tract at residues 3539-3574 (LDNAFRITNNRIDDVEKKANAGIAAAMALESAPYVP) is outer membrane translocation of the passenger domain. Transmembrane regions (beta stranded) follow at residues 3575-3585 (GKYTYAAGAAY), 3589-3599 (ENAVGVTLRKT), 3608-3614 (TGGVAAA), and 3618-3629 (DASVRIGISGVI). The segment at 3575 to 3630 (GKYTYAAGAAYHGGENAVGVTLRKTADNGRWSITGGVAAASQGDASVRIGISGVID) is translocator domain.

The protein belongs to the autotransporter-2 (AT-2) (TC 1.B.40) family. Homotrimer. Interacts with TpgA.

The protein localises to the cell surface. It is found in the cell outer membrane. Its function is as follows. Responsible for autoagglutination, and for adhesion to abiotic and biotic surfaces such as polystyrene (PS), type I collagen, polypropylene (PP), polyvinylchloride (PVC), glass and stainless steel (SS). Adhesion is much stronger than that mediated by Yersinia YadA in a comparative assay. Confers autoagglutination and binding to PS, type I collagen, PP, PVC, glass and SS upon expression in Acinetobacter baylyi strain ADP1. Involved in rapid, irreversible adherence to polyurethane. Forms an unusual biofilm. An extended, surface exposed fiber binds to quartz crystals, PS and glass. It can be removed by washing in distilled water. The polypeptide is Trimeric autotransporter adhesin AtaA (Acinetobacter sp. (strain Tol 5)).